The sequence spans 459 residues: Argininosuccinate lyase (459 aa).

This sequence belongs to the lyase 1 family. Argininosuccinate lyase subfamily.

Its subcellular location is the cytoplasm. The catalysed reaction is 2-(N(omega)-L-arginino)succinate = fumarate + L-arginine. Its pathway is amino-acid biosynthesis; L-arginine biosynthesis; L-arginine from L-ornithine and carbamoyl phosphate: step 3/3. The chain is Argininosuccinate lyase from Prochlorococcus marinus (strain MIT 9301).